Consider the following 845-residue polypeptide: Proto-oncogene vav (845 aa).

The Calponin-homology (CH) domain maps to 1–119 (MELWRQCTHW…YTLSALSWTP (119 aa)). Residues 194–373 (KRCCCLREIQ…RDLAQCVNEV (180 aa)) enclose the DH domain. The region spanning 402 to 504 (RPKIDGELKI…WMEQFEMAIS (103 aa)) is the PH domain. A Phorbol-ester/DAG-type zinc finger spans residues 515–564 (GHDFQMFSFEETTSCKACQMLLRGTFYQGYRCYRCRAPAHKECLGRVPPC). In terms of domain architecture, SH3 1 spans 592–660 (LGLPKMEVFQ…PCNRVHPYVH (69 aa)). The SH2 domain maps to 671 to 765 (WYAGPMERAG…SLDTTLQFPY (95 aa)). The region spanning 782 to 842 (KYFGTAKARY…PSNYVEEDYS (61 aa)) is the SH3 2 domain. Phosphotyrosine is present on residues Tyr826 and Tyr844.

In terms of assembly, interacts with SHB. Interacts with APS, DOCK2, GRB2, GRB3, DOCK2, SLA, TEC and ZNF655/VIK. Interacts with SIAH2; without leading to its degradation. Associates with BLNK, PLCG1, GRB2 and NCK1 in a B-cell antigen receptor-dependent fashion. Interacts with CBLB; which inhibits tyrosine phosphorylation and down-regulates activity. May interact with CCPG1. Interacts with CLNK. Interacts with THEMIS2. Interacts with NEK3 and this interaction is prolactin-dependent. Interacts with ITK. Interacts with PTK2B/PYK2. Interacts with HCK. Interacts with PTK2B/PYK2. Interacts (via SH2 domain) with SYK. Interacts with ANKRD54. Interacts with CD6. Interacts with isoform 2 of CRACR2A. Interacts with LCP2; this interaction plays a role in TCR-mediated cytokine production. Post-translationally, phosphorylated by FYN. Phosphorylated on tyrosine residues by HCK in response to IFNG and bacterial lipopolysaccharide (LPS). In terms of tissue distribution, widely expressed in hematopoietic cells but not in other cell types. Found in the spleen and lung.

Couples tyrosine kinase signals with the activation of the Rho/Rac GTPases, thus leading to cell differentiation and/or proliferation. This is Proto-oncogene vav (Vav1) from Mus musculus (Mouse).